A 611-amino-acid chain; its full sequence is Virulence metalloprotease (611 aa).

The signal sequence occupies residues 1 to 25 (MKKVQRQMKWLFLAASISAALPVSA). The propeptide occupies 26 to 199 (AKMVQVDDPS…VLQTWEGLNH (174 aa)). H346 provides a ligand contact to Zn(2+). E347 is a catalytic residue. 2 residues coordinate Zn(2+): H350 and E370. H429 (proton donor) is an active-site residue.

It belongs to the peptidase M4 family. Requires Ca(2+) as cofactor. Zn(2+) serves as cofactor. Seems to be more extensively processed.

It is found in the secreted. Extracellular zinc metalloprotease involved in the virulence mechanism of V.anguillarum. The protein is Virulence metalloprotease (empA) of Vibrio anguillarum (Listonella anguillarum).